An 880-amino-acid chain; its full sequence is DNA-directed RNA polymerase subunit Rpo1N (880 aa).

Zn(2+)-binding residues include C58, C61, C68, H71, C98, C101, C146, and C149. Positions 456, 458, and 460 each coordinate Mg(2+). Residues R573, C575, C580, H582, and S584 each contribute to the Zn(2+) site.

The protein belongs to the RNA polymerase beta' chain family. As to quaternary structure, part of the 13-subunit RNA polymerase complex. Interacts with TFS4. In terms of assembly, (Microbial infection) Binds viral protein RIP, which blocks global transcription. Mg(2+) is required as a cofactor. Zn(2+) serves as cofactor.

The protein resides in the cytoplasm. The catalysed reaction is RNA(n) + a ribonucleoside 5'-triphosphate = RNA(n+1) + diphosphate. Its activity is regulated as follows. (Microbial infection) Binds to viral protein RIP (AC Q3V4R7), which inhibits global transcription. Its function is as follows. DNA-dependent RNA polymerase (RNAP) catalyzes the transcription of DNA into RNA using the four ribonucleoside triphosphates as substrates. Forms the clamp head domain. The protein is DNA-directed RNA polymerase subunit Rpo1N of Sulfolobus acidocaldarius (strain ATCC 33909 / DSM 639 / JCM 8929 / NBRC 15157 / NCIMB 11770).